A 372-amino-acid chain; its full sequence is Glutamate 5-kinase (372 aa).

Lys14 is an ATP binding site. Substrate is bound by residues Ser54, Asp141, and Asn153. Position 173 to 174 (173 to 174 (TD)) interacts with ATP. Residues 280 to 358 (RGHVVIDAGA…GEIESVLGYM (79 aa)) enclose the PUA domain.

It belongs to the glutamate 5-kinase family.

Its subcellular location is the cytoplasm. The catalysed reaction is L-glutamate + ATP = L-glutamyl 5-phosphate + ADP. The protein operates within amino-acid biosynthesis; L-proline biosynthesis; L-glutamate 5-semialdehyde from L-glutamate: step 1/2. Functionally, catalyzes the transfer of a phosphate group to glutamate to form L-glutamate 5-phosphate. This Burkholderia multivorans (strain ATCC 17616 / 249) protein is Glutamate 5-kinase.